A 455-amino-acid polypeptide reads, in one-letter code: 2-succinylbenzoate--CoA ligase (455 aa).

This sequence belongs to the ATP-dependent AMP-binding enzyme family. MenE subfamily.

It catalyses the reaction 2-succinylbenzoate + ATP + CoA = 2-succinylbenzoyl-CoA + AMP + diphosphate. It functions in the pathway quinol/quinone metabolism; 1,4-dihydroxy-2-naphthoate biosynthesis; 1,4-dihydroxy-2-naphthoate from chorismate: step 5/7. The protein operates within quinol/quinone metabolism; menaquinone biosynthesis. Functionally, converts 2-succinylbenzoate (OSB) to 2-succinylbenzoyl-CoA (OSB-CoA). This Salmonella typhimurium (strain LT2 / SGSC1412 / ATCC 700720) protein is 2-succinylbenzoate--CoA ligase.